Consider the following 312-residue polypeptide: MGWSRKDLLHIEDLPAKEIQLILNTAKPMKEIMSRAVKKLPTFRGKSVYNLFFESSTRTRTSFETAAKILGADTSSLAVAQSSLNKGETLLDTVRTLQAMKPDLVVIRHSSSGAAQFLAKELKAGVINAGDGQHEHPTQALLDLYTMQERLGSVEGRKILLVGDILHSRVARSNVWALKNLGAEVVLVGPPTLLPPEIKSWGVKTTFNLDEELPGSDVIMALRLQLERQQSGLLPSLREYSQLYGITAERVKKTGKQTLIMHPGPVNRGVEIESSIANSSQSVIEEQVTNGVAVRMAIMYLLLGGGTAHVVD.

2 residues coordinate carbamoyl phosphate: Arg-58 and Thr-59. Lys-86 is an L-aspartate binding site. Carbamoyl phosphate is bound by residues Arg-108, His-136, and Gln-139. Residues Arg-169 and Arg-223 each contribute to the L-aspartate site. Carbamoyl phosphate-binding residues include Gly-264 and Pro-265.

This sequence belongs to the aspartate/ornithine carbamoyltransferase superfamily. ATCase family. In terms of assembly, heterododecamer (2C3:3R2) of six catalytic PyrB chains organized as two trimers (C3), and six regulatory PyrI chains organized as three dimers (R2).

It catalyses the reaction carbamoyl phosphate + L-aspartate = N-carbamoyl-L-aspartate + phosphate + H(+). It functions in the pathway pyrimidine metabolism; UMP biosynthesis via de novo pathway; (S)-dihydroorotate from bicarbonate: step 2/3. In terms of biological role, catalyzes the condensation of carbamoyl phosphate and aspartate to form carbamoyl aspartate and inorganic phosphate, the committed step in the de novo pyrimidine nucleotide biosynthesis pathway. The polypeptide is Aspartate carbamoyltransferase catalytic subunit (Desulfitobacterium hafniense (strain DSM 10664 / DCB-2)).